The primary structure comprises 180 residues: ATP-dependent protease subunit HslV (180 aa).

Thr5 is a catalytic residue. Positions 165, 168, and 171 each coordinate Na(+).

This sequence belongs to the peptidase T1B family. HslV subfamily. As to quaternary structure, a double ring-shaped homohexamer of HslV is capped on each side by a ring-shaped HslU homohexamer. The assembly of the HslU/HslV complex is dependent on binding of ATP.

It is found in the cytoplasm. It catalyses the reaction ATP-dependent cleavage of peptide bonds with broad specificity.. With respect to regulation, allosterically activated by HslU binding. Functionally, protease subunit of a proteasome-like degradation complex believed to be a general protein degrading machinery. In Helicobacter pylori (strain J99 / ATCC 700824) (Campylobacter pylori J99), this protein is ATP-dependent protease subunit HslV.